Here is a 71-residue protein sequence, read N- to C-terminus: Putative membrane protein insertion efficiency factor (71 aa).

Belongs to the UPF0161 family.

It is found in the cell inner membrane. Functionally, could be involved in insertion of integral membrane proteins into the membrane. The polypeptide is Putative membrane protein insertion efficiency factor (Nitrosospira multiformis (strain ATCC 25196 / NCIMB 11849 / C 71)).